The following is a 716-amino-acid chain: Beta-galactosidase (716 aa).

Catalysis depends on Glu389, which acts as the Proton donor. Catalysis depends on Glu462, which acts as the Nucleophile.

The protein belongs to the glycosyl hydrolase 2 family. In terms of assembly, homodimer.

It carries out the reaction Hydrolysis of terminal non-reducing beta-D-galactose residues in beta-D-galactosides.. Functionally, displays beta-galactosidase activity with the artificial chromogenic substrate o-nitrophenyl-beta-D-galactopyranoside (ONPG). This chain is Beta-galactosidase, found in Thermoanaerobacterium thermosulfurigenes (Clostridium thermosulfurogenes).